Reading from the N-terminus, the 447-residue chain is Tubulin beta chain (447 aa).

GTP contacts are provided by glutamine 11, glutamate 69, serine 138, glycine 142, threonine 143, glycine 144, asparagine 204, and asparagine 226. Glutamate 69 is a binding site for Mg(2+).

Belongs to the tubulin family. As to quaternary structure, dimer of alpha and beta chains. A typical microtubule is a hollow water-filled tube with an outer diameter of 25 nm and an inner diameter of 15 nM. Alpha-beta heterodimers associate head-to-tail to form protofilaments running lengthwise along the microtubule wall with the beta-tubulin subunit facing the microtubule plus end conferring a structural polarity. Microtubules usually have 13 protofilaments but different protofilament numbers can be found in some organisms and specialized cells. Mg(2+) is required as a cofactor.

Its subcellular location is the cytoplasm. It localises to the cytoskeleton. Tubulin is the major constituent of microtubules, a cylinder consisting of laterally associated linear protofilaments composed of alpha- and beta-tubulin heterodimers. Microtubules grow by the addition of GTP-tubulin dimers to the microtubule end, where a stabilizing cap forms. Below the cap, tubulin dimers are in GDP-bound state, owing to GTPase activity of alpha-tubulin. The protein is Tubulin beta chain (TUB2) of Penicillium digitatum (Green mold).